We begin with the raw amino-acid sequence, 435 residues long: GTPase Der (435 aa).

EngA-type G domains are found at residues 4–167 (PTLA…PSED) and 175–350 (IKFS…ENQT). GTP is bound by residues 10-17 (GRPNVGKS), 57-61 (DTGGI), 119-122 (NKVD), 181-188 (GRPNVGKS), 228-232 (DTAGI), and 293-296 (NKWD). The region spanning 351 to 435 (RRIQSSVLND…PIHIIARKRK (85 aa)) is the KH-like domain.

Belongs to the TRAFAC class TrmE-Era-EngA-EngB-Septin-like GTPase superfamily. EngA (Der) GTPase family. Associates with the 50S ribosomal subunit.

Its function is as follows. GTPase that plays an essential role in the late steps of ribosome biogenesis. The protein is GTPase Der of Lacticaseibacillus paracasei (strain ATCC 334 / BCRC 17002 / CCUG 31169 / CIP 107868 / KCTC 3260 / NRRL B-441) (Lactobacillus paracasei).